Here is a 239-residue protein sequence, read N- to C-terminus: Adenylate kinase 2 (239 aa).

29–34 (GSGKGT) serves as a coordination point for ATP. The segment at 49–78 (STGDILRAIIASGSELGQKVQKITESGGLV) is NMP. AMP-binding positions include threonine 50, arginine 55, 76–78 (GLV), 104–107 (GFPR), and glutamine 111. Residues 145–182 (GRLFHLASGRSYHELFNPPKVPMVDDITGDRLVHRSDD) form an LID region. Residues arginine 146 and 155–156 (SY) each bind ATP. AMP is bound by residues arginine 179 and arginine 190.

Belongs to the adenylate kinase family. AK2 subfamily. In terms of assembly, monomer. Requires Mg(2+) as cofactor.

It localises to the cytoplasm. Its subcellular location is the cytosol. It carries out the reaction AMP + ATP = 2 ADP. The protein operates within purine metabolism; purine nucleotide biosynthesis. Catalyzes the reversible transfer of the terminal phosphate group between ATP and AMP. Plays an important role in cellular energy homeostasis and in adenine nucleotide metabolism. This Schistosoma mansoni (Blood fluke) protein is Adenylate kinase 2.